The following is a 368-amino-acid chain: Phospho-N-acetylmuramoyl-pentapeptide-transferase (368 aa).

Helical transmembrane passes span 30–50, 72–92, 98–118, 139–159, 170–190, 208–228, 238–258, 264–286, and 345–365; these read AAAI…IRYL, LPTM…LLWS, HVWL…IDDY, VALG…SVLM, LTID…TALS, AIVV…VYAT, GGEI…FLWF, EIFM…ALLI, and KIVI…LMTL.

This sequence belongs to the glycosyltransferase 4 family. MraY subfamily. Mg(2+) is required as a cofactor.

The protein resides in the cell inner membrane. The enzyme catalyses UDP-N-acetyl-alpha-D-muramoyl-L-alanyl-gamma-D-glutamyl-meso-2,6-diaminopimeloyl-D-alanyl-D-alanine + di-trans,octa-cis-undecaprenyl phosphate = di-trans,octa-cis-undecaprenyl diphospho-N-acetyl-alpha-D-muramoyl-L-alanyl-D-glutamyl-meso-2,6-diaminopimeloyl-D-alanyl-D-alanine + UMP. Its pathway is cell wall biogenesis; peptidoglycan biosynthesis. In terms of biological role, catalyzes the initial step of the lipid cycle reactions in the biosynthesis of the cell wall peptidoglycan: transfers peptidoglycan precursor phospho-MurNAc-pentapeptide from UDP-MurNAc-pentapeptide onto the lipid carrier undecaprenyl phosphate, yielding undecaprenyl-pyrophosphoryl-MurNAc-pentapeptide, known as lipid I. This is Phospho-N-acetylmuramoyl-pentapeptide-transferase from Chlorobium luteolum (strain DSM 273 / BCRC 81028 / 2530) (Pelodictyon luteolum).